Reading from the N-terminus, the 410-residue chain is Angiopoietin-related protein 4 (410 aa).

Residues 1–23 (MRCAPTAGAALVLCAATAGLLSA) form the signal peptide. The tract at residues 79–101 (ACQGPKGKDAPFKDSEDRVPEGQ) is disordered. Basic and acidic residues predominate over residues 84 to 98 (KGKDAPFKDSEDRVP). Residues 104–152 (ETLQSLQTQLKAQNSKIQQLFQKVAQQQRYLSKQNLRIQNLQSQIDLLA) are a coiled coil. N-linked (GlcNAc...) asparagine glycosylation is present at Asn181. A Fibrinogen C-terminal domain is found at 183 to 405 (THLHRPPRDC…ATTLLIQPME (223 aa)). Cys192 and Cys220 are oxidised to a cystine. 2 N-linked (GlcNAc...) asparagine glycosylation sites follow: Asn236 and Asn242. Cysteines 345 and 358 form a disulfide.

Homooligomer; disulfide-linked via Cys residues in the N-terminal part of the protein. The homooligomer undergoes proteolytic processing to release the ANGPTL4 C-terminal chain, which circulates as a monomer. The homooligomer unprocessed form is able to interact with the extracellular matrix. Post-translationally, N-glycosylated. Forms disulfide-linked dimers and tetramers. In terms of processing, cleaved into a smaller N-terminal chain and a larger chain that contains the fibrinogen C-terminal domain; both cleaved and uncleaved forms are detected in the extracellular space. The cleaved form is not present within the cell. Detected in liver and kidney. Predominantly expressed in adipose tissue and is strongly up-regulated by fasting in white adipose tissue and liver. More abundant in areas of lower flow stress in the inner curvature compared to the outer curvature regions of the aorta (at protein level).

The protein localises to the secreted. The protein resides in the extracellular space. It is found in the extracellular matrix. Functionally, mediates inactivation of the lipoprotein lipase LPL, and thereby plays a role in the regulation of triglyceride clearance from the blood serum and in lipid metabolism. May also play a role in regulating glucose homeostasis and insulin sensitivity. Inhibits proliferation, migration, and tubule formation of endothelial cells and reduces vascular leakage. Upon heterologous expression, inhibits the adhesion of endothelial cell to the extracellular matrix (ECM), and inhibits the reorganization of the actin cytoskeleton, formation of actin stress fibers and focal adhesions in endothelial cells that have adhered to ANGPTL4-containing ECM (in vitro). Depending on context, may modulate tumor-related angiogenesis. In terms of biological role, mediates inactivation of the lipoprotein lipase LPL, and thereby plays an important role in the regulation of triglyceride clearance from the blood serum and in lipid metabolism. Has higher activity in LPL inactivation than the uncleaved protein. This Mus musculus (Mouse) protein is Angiopoietin-related protein 4 (Angptl4).